Here is a 316-residue protein sequence, read N- to C-terminus: Protoheme IX farnesyltransferase 2 (316 aa).

The segment covering 1 to 15 has biased composition (polar residues); it reads MEQNLNSEQKPQSSA. Positions 1–24 are disordered; sequence MEQNLNSEQKPQSSAKPRGKSSRS. The next 7 membrane-spanning stretches (helical) occupy residues 62–82, 117–137, 163–183, 188–208, 231–251, 252–272, and 293–313; these read IPEM…AGAF, IVML…AAAF, IGSI…STDI, IARF…AIAI, TYYQ…LFGS, LSVG…VMSI, and LFHM…GVIF.

It belongs to the UbiA prenyltransferase family. Protoheme IX farnesyltransferase subfamily. As to quaternary structure, interacts with CtaA.

The protein localises to the cell membrane. It catalyses the reaction heme b + (2E,6E)-farnesyl diphosphate + H2O = Fe(II)-heme o + diphosphate. It participates in porphyrin-containing compound metabolism; heme O biosynthesis; heme O from protoheme: step 1/1. Converts heme B (protoheme IX) to heme O by substitution of the vinyl group on carbon 2 of heme B porphyrin ring with a hydroxyethyl farnesyl side group. This chain is Protoheme IX farnesyltransferase 2, found in Lysinibacillus sphaericus (strain C3-41).